A 164-amino-acid chain; its full sequence is B-phycoerythrin alpha chain (164 aa).

(2R,3E)-phycoerythrobilin is bound by residues cysteine 82 and cysteine 139.

The protein belongs to the phycobiliprotein family. Heteromer of 6 alpha, 6 beta and one gamma chain. In terms of processing, contains two covalently linked bilin chromophores.

Its subcellular location is the plastid. It localises to the chloroplast thylakoid membrane. Functionally, light-harvesting photosynthetic bile pigment-protein from the phycobiliprotein complex. This Rhodella violacea (Red alga) protein is B-phycoerythrin alpha chain (cpeA).